The following is a 357-amino-acid chain: DNA replication and repair protein RecF (357 aa).

Residue 30-37 (GANGSGKT) coordinates ATP.

It belongs to the RecF family.

The protein resides in the cytoplasm. Its function is as follows. The RecF protein is involved in DNA metabolism; it is required for DNA replication and normal SOS inducibility. RecF binds preferentially to single-stranded, linear DNA. It also seems to bind ATP. This chain is DNA replication and repair protein RecF, found in Escherichia coli O7:K1 (strain IAI39 / ExPEC).